A 538-amino-acid chain; its full sequence is Bifunctional purine biosynthesis protein PurH (538 aa).

Positions 11–158 (PDLHRVRRAL…KNHAYTGVVT (148 aa)) constitute an MGS-like domain.

It belongs to the PurH family.

It carries out the reaction (6R)-10-formyltetrahydrofolate + 5-amino-1-(5-phospho-beta-D-ribosyl)imidazole-4-carboxamide = 5-formamido-1-(5-phospho-D-ribosyl)imidazole-4-carboxamide + (6S)-5,6,7,8-tetrahydrofolate. The enzyme catalyses IMP + H2O = 5-formamido-1-(5-phospho-D-ribosyl)imidazole-4-carboxamide. The protein operates within purine metabolism; IMP biosynthesis via de novo pathway; 5-formamido-1-(5-phospho-D-ribosyl)imidazole-4-carboxamide from 5-amino-1-(5-phospho-D-ribosyl)imidazole-4-carboxamide (10-formyl THF route): step 1/1. Its pathway is purine metabolism; IMP biosynthesis via de novo pathway; IMP from 5-formamido-1-(5-phospho-D-ribosyl)imidazole-4-carboxamide: step 1/1. The sequence is that of Bifunctional purine biosynthesis protein PurH from Bartonella bacilliformis (strain ATCC 35685 / KC583 / Herrer 020/F12,63).